A 498-amino-acid polypeptide reads, in one-letter code: Probable malate:quinone oxidoreductase 2 (498 aa).

The protein belongs to the MQO family. FAD serves as cofactor.

It carries out the reaction (S)-malate + a quinone = a quinol + oxaloacetate. It participates in carbohydrate metabolism; tricarboxylic acid cycle; oxaloacetate from (S)-malate (quinone route): step 1/1. This is Probable malate:quinone oxidoreductase 2 from Staphylococcus aureus (strain COL).